The sequence spans 334 residues: UDP-N-acetylglucosamine--N-acetylmuramyl-(pentapeptide) pyrophosphoryl-undecaprenol N-acetylglucosamine transferase (334 aa).

Residues 11-13 (TGG), Asn125, Ser185, Ile229, and Gln274 each bind UDP-N-acetyl-alpha-D-glucosamine.

It belongs to the glycosyltransferase 28 family. MurG subfamily.

The protein localises to the cell inner membrane. The catalysed reaction is di-trans,octa-cis-undecaprenyl diphospho-N-acetyl-alpha-D-muramoyl-L-alanyl-D-glutamyl-meso-2,6-diaminopimeloyl-D-alanyl-D-alanine + UDP-N-acetyl-alpha-D-glucosamine = di-trans,octa-cis-undecaprenyl diphospho-[N-acetyl-alpha-D-glucosaminyl-(1-&gt;4)]-N-acetyl-alpha-D-muramoyl-L-alanyl-D-glutamyl-meso-2,6-diaminopimeloyl-D-alanyl-D-alanine + UDP + H(+). Its pathway is cell wall biogenesis; peptidoglycan biosynthesis. In terms of biological role, cell wall formation. Catalyzes the transfer of a GlcNAc subunit on undecaprenyl-pyrophosphoryl-MurNAc-pentapeptide (lipid intermediate I) to form undecaprenyl-pyrophosphoryl-MurNAc-(pentapeptide)GlcNAc (lipid intermediate II). This is UDP-N-acetylglucosamine--N-acetylmuramyl-(pentapeptide) pyrophosphoryl-undecaprenol N-acetylglucosamine transferase from Thermosipho africanus (strain TCF52B).